The chain runs to 370 residues: Cathepsin B-like cysteine proteinase 3 (370 aa).

The signal sequence occupies residues 1-16; that stretch reads MLKVYFLALFLAGCSA. The propeptide occupies 17–91; the sequence is FVLDEIRGIN…FVRGEIVPEP (75 aa). 6 disulfide bridges follow: Cys-105–Cys-134, Cys-117–Cys-162, Cys-153–Cys-210, Cys-154–Cys-158, Cys-190–Cys-214, and Cys-198–Cys-202. The active site involves Cys-120. A glycan (N-linked (GlcNAc...) asparagine) is linked at Asn-138. Active-site residues include His-284 and Asn-304.

Belongs to the peptidase C1 family.

This is Cathepsin B-like cysteine proteinase 3 (cpr-3) from Caenorhabditis elegans.